We begin with the raw amino-acid sequence, 282 residues long: Phosphoglucan phosphatase LSF2, chloroplastic (282 aa).

A chloroplast-targeting transit peptide spans 1–61; it reads MSVIGSKSCI…GENPGTNGVS (61 aa). Substrate contacts are provided by residues Tyr-83, 153–156, Asp-161, and 177–180; these read RHMR and SLEW. The 158-residue stretch at 92–249 folds into the Tyrosine-protein phosphatase domain; that stretch reads NYTLIRDELI…TYDLAKNDPW (158 aa). The active-site Phosphocysteine intermediate is Cys-193. The Glucan phosphatase signature motif CXAGXGR motif lies at 193–199; the sequence is CSAGLGR. Residues 194–199, Gly-230, Lys-245, Glu-251, 259–263, and Glu-268 contribute to the substrate site; these read SAGLGR and NAFED.

In terms of tissue distribution, widely expressed.

It localises to the plastid. It is found in the chloroplast. In terms of biological role, starch-associated phosphoglucan phosphatase that selectively dephosphorylates the glucan C3 position. Probably participates in the regulation of starch degradation. This Arabidopsis thaliana (Mouse-ear cress) protein is Phosphoglucan phosphatase LSF2, chloroplastic (LSF2).